We begin with the raw amino-acid sequence, 383 residues long: Protein delta homolog 1 (383 aa).

The N-terminal stretch at 1-23 (MTATEALLRVLLLLLAFGHSTYG) is a signal peptide. 6 EGF-like domains span residues 24 to 55 (AECF…PLCD), 53 to 86 (LCDQ…ELCD), 88 to 125 (DVRA…KDCQ), 127 to 168 (KDGP…NFCE), 170 to 206 (VANS…KTCS), and 208 to 245 (PVTN…LTCV). Residues 24–303 (AECFPACNPQ…KKTPLLTEGQ (280 aa)) lie on the Extracellular side of the membrane. Intrachain disulfides connect Cys-26–Cys-37, Cys-30–Cys-43, Cys-45–Cys-54, Cys-57–Cys-68, Cys-63–Cys-74, Cys-76–Cys-85, Cys-92–Cys-103, Cys-97–Cys-113, Cys-115–Cys-124, Cys-131–Cys-144, Cys-138–Cys-156, and Cys-158–Cys-167. A glycan (O-linked (GalNAc...) serine) is linked at Ser-94. N-linked (GlcNAc...) asparagine glycosylation is present at Asn-100. Thr-143 carries O-linked (GalNAc...) threonine glycosylation. A glycan (O-linked (GalNAc...) serine; partial) is linked at Ser-163. N-linked (GlcNAc...) asparagine; atypical; partial glycans are attached at residues Asn-165 and Asn-172. Cystine bridges form between Cys-174/Cys-185, Cys-179/Cys-194, Cys-196/Cys-205, Cys-212/Cys-223, Cys-217/Cys-233, and Cys-235/Cys-244. O-linked (GalNAc...) serine glycosylation is present at Ser-214. Residue Thr-222 is glycosylated (O-linked (GalNAc...) threonine; partial). Ser-251 carries an O-linked (GalNAc...) serine; partial glycan. A glycan (O-linked (GalNAc...) threonine) is linked at Thr-256. The O-linked (GalNAc...) serine; partial glycan is linked to Ser-260. The chain crosses the membrane as a helical span at residues 304–327 (AICFTILGVLTSLVVLGTVGIVFL). Topologically, residues 328-383 (NKCETWVSNLRYNHMLRKKKNLLLQYNSGEDLAVNIIFPEKIDMTTFSKEAGDEEI) are cytoplasmic.

As to quaternary structure, monomer. Interacts with SH3RF2. In terms of processing, N- and O-glycosylated. O-glycosylated with core 1 or possibly core 8 glycans. Found within the stromal cells in close contact to the vascular structure of placental villi, yolk sac, fetal liver, adrenal cortex and pancreas and in the beta cells of the islets of Langerhans in the adult pancreas. Found also in some forms of neuroendocrine lung tumor tissue.

The protein localises to the membrane. It localises to the cytoplasm. Functionally, may have a role in neuroendocrine differentiation. This chain is Protein delta homolog 1 (DLK1), found in Homo sapiens (Human).